Here is a 377-residue protein sequence, read N- to C-terminus: tRNA N6-adenosine threonylcarbamoyltransferase (377 aa).

Fe cation contacts are provided by His129 and His133. Residues 151–155, Asp184, Gly197, and Asn298 contribute to the substrate site; that span reads LVSGG. Asp326 is a binding site for Fe cation. Positions 358–377 are disordered; it reads DGAAAKSDPAIGSGRKGPKA.

It belongs to the KAE1 / TsaD family. Requires Fe(2+) as cofactor.

It is found in the cytoplasm. It carries out the reaction L-threonylcarbamoyladenylate + adenosine(37) in tRNA = N(6)-L-threonylcarbamoyladenosine(37) in tRNA + AMP + H(+). Functionally, required for the formation of a threonylcarbamoyl group on adenosine at position 37 (t(6)A37) in tRNAs that read codons beginning with adenine. Is involved in the transfer of the threonylcarbamoyl moiety of threonylcarbamoyl-AMP (TC-AMP) to the N6 group of A37, together with TsaE and TsaB. TsaD likely plays a direct catalytic role in this reaction. This chain is tRNA N6-adenosine threonylcarbamoyltransferase, found in Maricaulis maris (strain MCS10) (Caulobacter maris).